We begin with the raw amino-acid sequence, 267 residues long: MLKKRSRSKQALMAETNQSQNQKQSKTTPFPRLFTAFSSFKSFTENDAVASPTSILDTKPFSVLKNPFGSDNPKTQEPETRLKLEPKRIGLAIVDSLIQDETPEPGPRSGTILFGSQLRIRVPDSPISSSDFGIKTRNSQPETKKPGSESGLGSPRIISGYFPASDMELSEDYTCVTCHGPNPRTIHIFDNCIVESQPGVVFFRSSDPVNESDSDYSPPDSFLSCCCNCKKSLGPRDDIFMYRGDRAFCSSECRSIEMMMSEENDTK.

Disordered regions lie at residues 1–29 (MLKK…KTTP) and 124–156 (DSPI…GSPR). 2 stretches are compositionally biased toward polar residues: residues 15 to 28 (ETNQ…SKTT) and 126 to 141 (PISS…NSQP). The FLZ-type zinc finger occupies 221-265 (SFLSCCCNCKKSLGPRDDIFMYRGDRAFCSSECRSIEMMMSEEND).

Belongs to the FLZ family. Interacts with KIN10 and KIN11 via its FLZ-type zinc finger domain. Interacts with KINB1, KINB2, KINB3 and SNF4 via its N-terminal part. Interacts with HB21/ZHD3.

Its function is as follows. May act as an adapter to facilitate the interaction of SnRK1 complex with effector proteins, conferring tissue- and stimulus-type specific differences in the SnRK1 regulation pathway. The sequence is that of FCS-Like Zinc finger 8 from Arabidopsis thaliana (Mouse-ear cress).